We begin with the raw amino-acid sequence, 205 residues long: Molybdenum cofactor guanylyltransferase (205 aa).

Residues 14 to 16 (LAG), Lys27, Asp77, and Asp107 contribute to the GTP site. Position 107 (Asp107) interacts with Mg(2+).

It belongs to the MobA family. Monomer. It depends on Mg(2+) as a cofactor.

The protein localises to the cytoplasm. The catalysed reaction is Mo-molybdopterin + GTP + H(+) = Mo-molybdopterin guanine dinucleotide + diphosphate. Transfers a GMP moiety from GTP to Mo-molybdopterin (Mo-MPT) cofactor (Moco or molybdenum cofactor) to form Mo-molybdopterin guanine dinucleotide (Mo-MGD) cofactor. The polypeptide is Molybdenum cofactor guanylyltransferase (Burkholderia ambifaria (strain MC40-6)).